Consider the following 544-residue polypeptide: CTP synthase (544 aa).

Positions 1 to 266 (MTKFIFVTGG…DDLICERFGL (266 aa)) are amidoligase domain. Residue S13 participates in CTP binding. S13 contributes to the UTP binding site. ATP is bound by residues 14-19 (SLGKGI) and D71. 2 residues coordinate Mg(2+): D71 and E140. Residues 147–149 (DIE), 187–192 (KTKPTQ), and K223 each bind CTP. UTP contacts are provided by residues 187–192 (KTKPTQ) and K223. The Glutamine amidotransferase type-1 domain occupies 291–543 (TVAMVGKYVE…VKAAKNYSEA (253 aa)). Position 354 (G354) interacts with L-glutamine. C381 (nucleophile; for glutamine hydrolysis) is an active-site residue. Residues 382–385 (LGMQ), E404, and R471 each bind L-glutamine. Active-site residues include H516 and E518.

Belongs to the CTP synthase family. As to quaternary structure, homotetramer.

The enzyme catalyses UTP + L-glutamine + ATP + H2O = CTP + L-glutamate + ADP + phosphate + 2 H(+). The catalysed reaction is L-glutamine + H2O = L-glutamate + NH4(+). It catalyses the reaction UTP + NH4(+) + ATP = CTP + ADP + phosphate + 2 H(+). The protein operates within pyrimidine metabolism; CTP biosynthesis via de novo pathway; CTP from UDP: step 2/2. With respect to regulation, allosterically activated by GTP, when glutamine is the substrate; GTP has no effect on the reaction when ammonia is the substrate. The allosteric effector GTP functions by stabilizing the protein conformation that binds the tetrahedral intermediate(s) formed during glutamine hydrolysis. Inhibited by the product CTP, via allosteric rather than competitive inhibition. Functionally, catalyzes the ATP-dependent amination of UTP to CTP with either L-glutamine or ammonia as the source of nitrogen. Regulates intracellular CTP levels through interactions with the four ribonucleotide triphosphates. The chain is CTP synthase from Psychrobacter arcticus (strain DSM 17307 / VKM B-2377 / 273-4).